The primary structure comprises 262 residues: Flap endonuclease Xni (262 aa).

Residue Asp105 participates in Mg(2+) binding. One can recognise a 5'-3' exonuclease domain in the interval 164–251 (SQFLDLMALA…NINLKDFRAN (88 aa)). K(+) contacts are provided by Leu172, Ala173, Pro181, Ile183, and Ile186. An interaction with DNA region spans residues 185 to 190 (GIGPKS).

It belongs to the Xni family. Requires Mg(2+) as cofactor. It depends on K(+) as a cofactor.

Functionally, has flap endonuclease activity. During DNA replication, flap endonucleases cleave the 5'-overhanging flap structure that is generated by displacement synthesis when DNA polymerase encounters the 5'-end of a downstream Okazaki fragment. The protein is Flap endonuclease Xni of Shewanella putrefaciens (strain CN-32 / ATCC BAA-453).